Consider the following 40-residue polypeptide: Photosystem II reaction center protein J (40 aa).

A helical membrane pass occupies residues 8-28 (IPLWLIGTVTGIPVIGLVGIF).

It belongs to the PsbJ family. In terms of assembly, PSII is composed of 1 copy each of membrane proteins PsbA, PsbB, PsbC, PsbD, PsbE, PsbF, PsbH, PsbI, PsbJ, PsbK, PsbL, PsbM, PsbT, PsbX, PsbY, PsbZ, Psb30/Ycf12, at least 3 peripheral proteins of the oxygen-evolving complex and a large number of cofactors. It forms dimeric complexes.

The protein localises to the plastid. It is found in the chloroplast thylakoid membrane. In terms of biological role, one of the components of the core complex of photosystem II (PSII). PSII is a light-driven water:plastoquinone oxidoreductase that uses light energy to abstract electrons from H(2)O, generating O(2) and a proton gradient subsequently used for ATP formation. It consists of a core antenna complex that captures photons, and an electron transfer chain that converts photonic excitation into a charge separation. The sequence is that of Photosystem II reaction center protein J from Cucumis sativus (Cucumber).